The primary structure comprises 485 residues: Bifunctional protein GlmU (485 aa).

Residues 1–241 (MSASDFSSAV…ARELAGVNDR (241 aa)) are pyrophosphorylase. UDP-N-acetyl-alpha-D-glucosamine is bound by residues 13–16 (LAAG), K27, Q84, and 89–90 (GT). D114 provides a ligand contact to Mg(2+). G151, E166, N181, and N239 together coordinate UDP-N-acetyl-alpha-D-glucosamine. Position 239 (N239) interacts with Mg(2+). Residues 242-262 (VQLAEAGAELNRRTVIAAMRG) are linker. Positions 263 to 485 (GATIVDPATT…AAQNVHNQEG (223 aa)) are N-acetyltransferase. The UDP-N-acetyl-alpha-D-glucosamine site is built by R344 and K362. H374 serves as the catalytic Proton acceptor. Residues Y377 and N388 each coordinate UDP-N-acetyl-alpha-D-glucosamine. Residues A391, 397 to 398 (NY), S416, and A434 contribute to the acetyl-CoA site. The segment at 465 to 485 (RPGTAAAQAAEAAQNVHNQEG) is disordered. A compositionally biased stretch (low complexity) spans 469-478 (AAAQAAEAAQ).

In the N-terminal section; belongs to the N-acetylglucosamine-1-phosphate uridyltransferase family. The protein in the C-terminal section; belongs to the transferase hexapeptide repeat family. In terms of assembly, homotrimer. Mg(2+) is required as a cofactor.

The protein localises to the cytoplasm. It carries out the reaction alpha-D-glucosamine 1-phosphate + acetyl-CoA = N-acetyl-alpha-D-glucosamine 1-phosphate + CoA + H(+). The catalysed reaction is N-acetyl-alpha-D-glucosamine 1-phosphate + UTP + H(+) = UDP-N-acetyl-alpha-D-glucosamine + diphosphate. It functions in the pathway nucleotide-sugar biosynthesis; UDP-N-acetyl-alpha-D-glucosamine biosynthesis; N-acetyl-alpha-D-glucosamine 1-phosphate from alpha-D-glucosamine 6-phosphate (route II): step 2/2. The protein operates within nucleotide-sugar biosynthesis; UDP-N-acetyl-alpha-D-glucosamine biosynthesis; UDP-N-acetyl-alpha-D-glucosamine from N-acetyl-alpha-D-glucosamine 1-phosphate: step 1/1. It participates in bacterial outer membrane biogenesis; LPS lipid A biosynthesis. In terms of biological role, catalyzes the last two sequential reactions in the de novo biosynthetic pathway for UDP-N-acetylglucosamine (UDP-GlcNAc). The C-terminal domain catalyzes the transfer of acetyl group from acetyl coenzyme A to glucosamine-1-phosphate (GlcN-1-P) to produce N-acetylglucosamine-1-phosphate (GlcNAc-1-P), which is converted into UDP-GlcNAc by the transfer of uridine 5-monophosphate (from uridine 5-triphosphate), a reaction catalyzed by the N-terminal domain. The polypeptide is Bifunctional protein GlmU (Corynebacterium glutamicum (strain ATCC 13032 / DSM 20300 / JCM 1318 / BCRC 11384 / CCUG 27702 / LMG 3730 / NBRC 12168 / NCIMB 10025 / NRRL B-2784 / 534)).